A 144-amino-acid polypeptide reads, in one-letter code: 3-dehydroquinate dehydratase (144 aa).

The Proton acceptor role is filled by tyrosine 23. Substrate is bound by residues asparagine 74, histidine 80, and aspartate 87. Histidine 100 acts as the Proton donor in catalysis. Residues 101-102 (LS) and arginine 111 contribute to the substrate site.

The protein belongs to the type-II 3-dehydroquinase family. As to quaternary structure, homododecamer.

The enzyme catalyses 3-dehydroquinate = 3-dehydroshikimate + H2O. It functions in the pathway metabolic intermediate biosynthesis; chorismate biosynthesis; chorismate from D-erythrose 4-phosphate and phosphoenolpyruvate: step 3/7. Catalyzes a trans-dehydration via an enolate intermediate. The chain is 3-dehydroquinate dehydratase from Hydrogenovibrio crunogenus (strain DSM 25203 / XCL-2) (Thiomicrospira crunogena).